The following is a 475-amino-acid chain: Early growth response protein 1-B (475 aa).

Disordered stretches follow at residues 109–180 (NVSS…TASI) and 264–285 (PSRM…RPYA). Positions 111–140 (SSSSAPSSSPSSSSSSSSSSSSQSPPLSCS) are enriched in low complexity. Residues 170–179 (QPFQNASTAS) are compositionally biased toward polar residues. 3 consecutive C2H2-type zinc fingers follow at residues 284 to 308 (YACP…IRIH), 314 to 336 (FQCR…IRTH), and 342 to 364 (FACD…TKIH). Positions 355–379 (DERKRHTKIHLRQKDKKADKATPVS) are disordered. The span at 359–369 (RHTKIHLRQKD) shows a compositional bias: basic residues.

Belongs to the EGR C2H2-type zinc-finger protein family.

It is found in the nucleus. The protein resides in the cytoplasm. Its function is as follows. Transcriptional regulator. Recognizes and binds to the DNA sequence 5'-GCG(T/G)GGGCG-3'(EGR-site) in the promoter region of target genes. Binds double-stranded target DNA, irrespective of the cytosine methylation status. Regulates the transcription of numerous target genes, and thereby plays an important role in regulating the response to growth factors, DNA damage, and ischemia. Plays a role in the regulation of cell survival, proliferation and cell death. Mediates responses to ischemia and hypoxia; regulates the expression of proteins that are involved in inflammatory processes. Plays a role in regulating the expression of circadian clock genes. The sequence is that of Early growth response protein 1-B (egr1-b) from Xenopus laevis (African clawed frog).